The sequence spans 477 residues: MPIRGGRIVDTRGRTLLAKIWDQHVIAHVSDDTDLLHVDRHLLHDLGGSRGLIDLKSRNLPVHNPELTFATPDHAISTASGRAGTITTGQELLAALRTETSASGIRLFDIDQPGQGIVHVIGPELGLSLPGCLIVCGDSHTCTHGGLGALAFGIGSSELTHVLATQTIIQRRPKTMRVTFDGRMPFGVTAKDLILALIGHVGAAGGTGYAVEYAGSAIRGMPIEGRLTICNLSVELGAKMGLIAPDQTTFDYVRGRPYAPQGEMWERAVTAWRTLRSDSDAMFDREVTIDVGTIIPQITWGTSPEHVLGVDGRVPDPRDIADPARRGAIEIALDYMGLKPGAPIAGTKVDWVFIGSCTNSRLSDLRAAAEVARGRKVAPGVRAWVVPGSETVKRDAVAEGLDKIFIDAGFEWREPGCSMCLAANGETVPPGQRSVSTSNRNFIGRQGPRARTHLASPAMAAAAAVSGAIADVRTMER.

Residues Cys-357, Cys-417, and Cys-420 each contribute to the [4Fe-4S] cluster site.

It belongs to the aconitase/IPM isomerase family. LeuC type 1 subfamily. Heterodimer of LeuC and LeuD. [4Fe-4S] cluster is required as a cofactor.

It carries out the reaction (2R,3S)-3-isopropylmalate = (2S)-2-isopropylmalate. It participates in amino-acid biosynthesis; L-leucine biosynthesis; L-leucine from 3-methyl-2-oxobutanoate: step 2/4. Functionally, catalyzes the isomerization between 2-isopropylmalate and 3-isopropylmalate, via the formation of 2-isopropylmaleate. The sequence is that of 3-isopropylmalate dehydratase large subunit 1 from Bradyrhizobium diazoefficiens (strain JCM 10833 / BCRC 13528 / IAM 13628 / NBRC 14792 / USDA 110).